Reading from the N-terminus, the 482-residue chain is tRNA sulfurtransferase (482 aa).

In terms of domain architecture, THUMP spans 61–165 (LAIRDALTRI…DDRLLLIKGR (105 aa)). Residues 183–184 (LI), K265, G287, and Q296 contribute to the ATP site. C344 and C456 are joined by a disulfide. The Rhodanese domain occupies 404-482 (FGANDVILDI…GFANVKVYRP (79 aa)). C456 functions as the Cysteine persulfide intermediate in the catalytic mechanism.

The protein belongs to the ThiI family.

Its subcellular location is the cytoplasm. The catalysed reaction is [ThiI sulfur-carrier protein]-S-sulfanyl-L-cysteine + a uridine in tRNA + 2 reduced [2Fe-2S]-[ferredoxin] + ATP + H(+) = [ThiI sulfur-carrier protein]-L-cysteine + a 4-thiouridine in tRNA + 2 oxidized [2Fe-2S]-[ferredoxin] + AMP + diphosphate. The enzyme catalyses [ThiS sulfur-carrier protein]-C-terminal Gly-Gly-AMP + S-sulfanyl-L-cysteinyl-[cysteine desulfurase] + AH2 = [ThiS sulfur-carrier protein]-C-terminal-Gly-aminoethanethioate + L-cysteinyl-[cysteine desulfurase] + A + AMP + 2 H(+). Its pathway is cofactor biosynthesis; thiamine diphosphate biosynthesis. Catalyzes the ATP-dependent transfer of a sulfur to tRNA to produce 4-thiouridine in position 8 of tRNAs, which functions as a near-UV photosensor. Also catalyzes the transfer of sulfur to the sulfur carrier protein ThiS, forming ThiS-thiocarboxylate. This is a step in the synthesis of thiazole, in the thiamine biosynthesis pathway. The sulfur is donated as persulfide by IscS. This Salmonella paratyphi B (strain ATCC BAA-1250 / SPB7) protein is tRNA sulfurtransferase.